The following is a 340-amino-acid chain: tRNA N6-adenosine threonylcarbamoyltransferase (340 aa).

Fe cation is bound by residues H111 and H115. Residues 134–138 (LVSGG), D167, G180, and N276 contribute to the substrate site. D304 is a binding site for Fe cation.

This sequence belongs to the KAE1 / TsaD family. Fe(2+) serves as cofactor.

It is found in the cytoplasm. The catalysed reaction is L-threonylcarbamoyladenylate + adenosine(37) in tRNA = N(6)-L-threonylcarbamoyladenosine(37) in tRNA + AMP + H(+). Its function is as follows. Required for the formation of a threonylcarbamoyl group on adenosine at position 37 (t(6)A37) in tRNAs that read codons beginning with adenine. Is involved in the transfer of the threonylcarbamoyl moiety of threonylcarbamoyl-AMP (TC-AMP) to the N6 group of A37, together with TsaE and TsaB. TsaD likely plays a direct catalytic role in this reaction. The sequence is that of tRNA N6-adenosine threonylcarbamoyltransferase from Helicobacter pylori (strain G27).